The sequence spans 180 residues: Crossover junction endodeoxyribonuclease RuvC (180 aa).

Residues Asp-7, Glu-66, and Asp-138 contribute to the active site. Residues Asp-7, Glu-66, and Asp-138 each contribute to the Mg(2+) site.

Belongs to the RuvC family. As to quaternary structure, homodimer which binds Holliday junction (HJ) DNA. The HJ becomes 2-fold symmetrical on binding to RuvC with unstacked arms; it has a different conformation from HJ DNA in complex with RuvA. In the full resolvosome a probable DNA-RuvA(4)-RuvB(12)-RuvC(2) complex forms which resolves the HJ. Mg(2+) is required as a cofactor.

The protein resides in the cytoplasm. The enzyme catalyses Endonucleolytic cleavage at a junction such as a reciprocal single-stranded crossover between two homologous DNA duplexes (Holliday junction).. The RuvA-RuvB-RuvC complex processes Holliday junction (HJ) DNA during genetic recombination and DNA repair. Endonuclease that resolves HJ intermediates. Cleaves cruciform DNA by making single-stranded nicks across the HJ at symmetrical positions within the homologous arms, yielding a 5'-phosphate and a 3'-hydroxyl group; requires a central core of homology in the junction. The consensus cleavage sequence is 5'-(A/T)TT(C/G)-3'. Cleavage occurs on the 3'-side of the TT dinucleotide at the point of strand exchange. HJ branch migration catalyzed by RuvA-RuvB allows RuvC to scan DNA until it finds its consensus sequence, where it cleaves and resolves the cruciform DNA. This Burkholderia multivorans (strain ATCC 17616 / 249) protein is Crossover junction endodeoxyribonuclease RuvC.